A 266-amino-acid polypeptide reads, in one-letter code: Gasdermin bGSDM (266 aa).

Residue cysteine 6 is the site of S-palmitoyl cysteine attachment. The next 4 membrane-spanning stretches (beta stranded) occupy residues 70–86 (ISHS…AGNF), 99–117 (APKL…FSFS), 163–180 (AIDM…DVQA), and 189–205 (LGGK…TISF). The tract at residues 245 to 266 (GAAEPYLLRRGQVLIVEDMQAT) is C-terminal region.

Belongs to the bacterial gasdermin family. As to quaternary structure, monomer. In terms of assembly, forms large, homooligomeric ring-shaped pores when inserted in membranes. Cleavage by the adjacently encoded protease (probably ISF6_0256) predicted to occur between Glu-244 and Gly-245 relieves autoinhibition, releasing the N-terminus which initiates loss of cell integrity. Post-translationally, palmitoylation helps stabilize the inactive state; may self palmitoylate. Palmitoylation plays a significant role in pore formation.

Its subcellular location is the cytoplasm. The protein resides in the cell inner membrane. Its activity is regulated as follows. The full-length protein before cleavage is inactive: intramolecular interactions between the N-terminal domain and the C-terminal region as well as the lipid modification, mediate autoinhibition. The pyroptosis-like-inducing activity is carried by the released N-terminal domain (Gasdermin bGSDM, N-terminus). In terms of biological role, precursor of a pore-forming protein involved in defense against bacteriophages. Cleavage of this precursor by its dedicated, neighboring protease (probably ISF6_0256) releases the active moiety (gasdermin bGSDM, N-terminus) which inserts into membranes, forming pores and triggering cell death. Pore-forming protein that causes membrane permeabilization via a pyroptosis-like activity. Makes ring-like pores with an interior pore diameter of 300-400 Angstroms, when integrated in liposomes. The sequence is that of Gasdermin bGSDM from Piscinibacter sakaiensis (Ideonella sakaiensis).